The chain runs to 103 residues: Thrombin inhibitor rhodniin (103 aa).

Kazal-like domains follow at residues 1 to 50 (EGGE…PCEP) and 51 to 103 (DEDE…PCRT). 6 disulfide bridges follow: Cys-6–Cys-31, Cys-8–Cys-27, Cys-16–Cys-48, Cys-57–Cys-84, Cys-60–Cys-80, and Cys-69–Cys-101.

The protein localises to the secreted. Thrombin-specific inhibitor. Appears to form 1:1 complexes with thrombin. Prevents blood clotting to allow the insect to feed on blood. The chain is Thrombin inhibitor rhodniin from Rhodnius prolixus (Triatomid bug).